Consider the following 123-residue polypeptide: Histone H2B.1/H2B.2 (123 aa).

Residues 1–30 (MPPKVSGKAAKKAGKAQKNITKGDKKKNRK) are disordered. A glycan (O-linked (GlcNAc) serine) is linked at Ser-110. Lys-118 is covalently cross-linked (Glycyl lysine isopeptide (Lys-Gly) (interchain with G-Cter in ubiquitin)).

This sequence belongs to the histone H2B family. As to quaternary structure, the nucleosome is a histone octamer containing two molecules each of H2A, H2B, H3 and H4 assembled in one H3-H4 heterotetramer and two H2A-H2B heterodimers. The octamer wraps approximately 147 bp of DNA. Monoubiquitination of Lys-118 gives a specific tag for epigenetic transcriptional activation and is also prerequisite for histone H3 'Lys-4' and 'Lys-79' methylation. Post-translationally, glcNAcylation at Ser-110 promotes monoubiquitination of Lys-118. It fluctuates in response to extracellular glucose, and associates with transcribed genes.

It is found in the nucleus. Its subcellular location is the chromosome. Core component of nucleosome. Nucleosomes wrap and compact DNA into chromatin, limiting DNA accessibility to the cellular machineries which require DNA as a template. Histones thereby play a central role in transcription regulation, DNA repair, DNA replication and chromosomal stability. DNA accessibility is regulated via a complex set of post-translational modifications of histones, also called histone code, and nucleosome remodeling. This chain is Histone H2B.1/H2B.2, found in Tigriopus californicus (Marine copepod).